The chain runs to 477 residues: Histidine--tRNA ligase (477 aa).

Belongs to the class-II aminoacyl-tRNA synthetase family. As to quaternary structure, homodimer.

The protein resides in the cytoplasm. It carries out the reaction tRNA(His) + L-histidine + ATP = L-histidyl-tRNA(His) + AMP + diphosphate + H(+). The protein is Histidine--tRNA ligase of Xanthomonas campestris pv. campestris (strain 8004).